The sequence spans 530 residues: MPKLIIVTGGVMSGVGKGVVVASIGRILRARGLSVNAVKIDPYINVDAGTMNPYAHGEVFVTYDGGETDLDLGHYERFLDVELSKRNNITSGQIYLTVIEKERRGEYLGQTVQLIPHVTDEIKRRIVEASGGYDVTLVEIGGTVGDYEQLPFLEAARQLGLELGEDVVFIHVAWVPLLKITGEFKTKPLQHSVAELRRYGIQPDAVVVRSEKPIDANSIKKIALFAHVPQWAIFNSYDVDTIYRVPLILEQQGLGDFLTRRLRLPSRSPEYRDWEEFLSKLSAPKYRISVGMCGKYVELPDAYLSIVEALKHAGAALDARPELVWINSVEVEKNPDILRKLDLDAIVVLPGFGKRGTEGMIECIRHARMEKIPFLGICFGMQLAVVEFARNVLGLKGANSTELDPETPHPVVHLAPEQREVDVLGGSMILGNREVEIVPGTLAASLYGVSVITERHRHRYEVNLSYLPKFTEAGLVVSGWRRDIKRVEIIELPGHPYFIATQFHPEFKSRPAKPRPVFLGLLKAALFAKR.

The amidoligase domain stretch occupies residues 1-264 (MPKLIIVTGG…GDFLTRRLRL (264 aa)). Serine 13 is a CTP binding site. Position 13 (serine 13) interacts with UTP. Residue 14–19 (GVGKGV) coordinates ATP. Tyrosine 54 provides a ligand contact to L-glutamine. ATP is bound at residue aspartate 71. Aspartate 71 and glutamate 139 together coordinate Mg(2+). CTP-binding positions include 146 to 148 (DYE), 185 to 190 (KTKPLQ), and lysine 221. Residues 185–190 (KTKPLQ) and lysine 221 each bind UTP. Residues 289-530 (SVGMCGKYVE…LLKAALFAKR (242 aa)) enclose the Glutamine amidotransferase type-1 domain. Position 351 (glycine 351) interacts with L-glutamine. The Nucleophile; for glutamine hydrolysis role is filled by cysteine 378. Residues 379–382 (FGMQ), glutamate 402, and arginine 459 each bind L-glutamine. Residues histidine 504 and glutamate 506 contribute to the active site.

This sequence belongs to the CTP synthase family. In terms of assembly, homotetramer.

The enzyme catalyses UTP + L-glutamine + ATP + H2O = CTP + L-glutamate + ADP + phosphate + 2 H(+). The catalysed reaction is L-glutamine + H2O = L-glutamate + NH4(+). It catalyses the reaction UTP + NH4(+) + ATP = CTP + ADP + phosphate + 2 H(+). It functions in the pathway pyrimidine metabolism; CTP biosynthesis via de novo pathway; CTP from UDP: step 2/2. Allosterically activated by GTP, when glutamine is the substrate; GTP has no effect on the reaction when ammonia is the substrate. The allosteric effector GTP functions by stabilizing the protein conformation that binds the tetrahedral intermediate(s) formed during glutamine hydrolysis. Inhibited by the product CTP, via allosteric rather than competitive inhibition. Catalyzes the ATP-dependent amination of UTP to CTP with either L-glutamine or ammonia as the source of nitrogen. Regulates intracellular CTP levels through interactions with the four ribonucleotide triphosphates. This Pyrobaculum aerophilum (strain ATCC 51768 / DSM 7523 / JCM 9630 / CIP 104966 / NBRC 100827 / IM2) protein is CTP synthase.